A 124-amino-acid polypeptide reads, in one-letter code: Small ribosomal subunit protein uS12 (124 aa).

A compositionally biased stretch (basic residues) spans 11–20 (GRKRLKKKSK). Positions 11-30 (GRKRLKKKSKSPALENNPQK) are disordered. Asp89 bears the 3-methylthioaspartic acid mark. Residues 105-124 (EGVANRRQSRSRYGAKKPKK) are disordered. Residues 111-124 (RQSRSRYGAKKPKK) are compositionally biased toward basic residues.

It belongs to the universal ribosomal protein uS12 family. Part of the 30S ribosomal subunit. Contacts proteins S8 and S17. May interact with IF1 in the 30S initiation complex.

Its function is as follows. With S4 and S5 plays an important role in translational accuracy. Interacts with and stabilizes bases of the 16S rRNA that are involved in tRNA selection in the A site and with the mRNA backbone. Located at the interface of the 30S and 50S subunits, it traverses the body of the 30S subunit contacting proteins on the other side and probably holding the rRNA structure together. The combined cluster of proteins S8, S12 and S17 appears to hold together the shoulder and platform of the 30S subunit. In Kosmotoga olearia (strain ATCC BAA-1733 / DSM 21960 / TBF 19.5.1), this protein is Small ribosomal subunit protein uS12.